We begin with the raw amino-acid sequence, 94 residues long: Putative pterin-4-alpha-carbinolamine dehydratase (94 aa).

The protein belongs to the pterin-4-alpha-carbinolamine dehydratase family.

The catalysed reaction is (4aS,6R)-4a-hydroxy-L-erythro-5,6,7,8-tetrahydrobiopterin = (6R)-L-erythro-6,7-dihydrobiopterin + H2O. The protein is Putative pterin-4-alpha-carbinolamine dehydratase of Koribacter versatilis (strain Ellin345).